A 963-amino-acid polypeptide reads, in one-letter code: Protein suppressor of white apricot (963 aa).

The stretch at 234–276 (IIEKTARFIATQGAQMEILIKAKQANNTQFDFLTQGGHLQPYY) is one SURP motif 1 repeat. Disordered regions lie at residues 290 to 322 (PAPQTPLDQQNTDKEAPSADDHSEEVAGGRRNP) and 360 to 430 (EDES…EPPQ). Over residues 300–317 (NTDKEAPSADDHSEEVAG) the composition is skewed to basic and acidic residues. Residues 364–375 (SNPGNSQHSGGT) show a composition bias toward polar residues. The segment covering 407–418 (THEEESSNREQQ) has biased composition (basic and acidic residues). Residues Ser438, Ser447, Ser448, and Ser450 each carry the phosphoserine modification. The tract at residues 445-470 (NYSSESEEEEDQVQPEKEEEKKPEPV) is disordered. Residues 458–468 (QPEKEEEKKPE) show a composition bias toward basic and acidic residues. An SURP motif 2 repeat occupies 483–523 (IIDKTATYVIKNGRQFEETLRTKSVDRFSFLLPANEYYPYY). Disordered regions lie at residues 593–613 (PQEASDEETSSNAAGVEHVRP), 634–662 (TAGQKGNITASPSCSSPQKEQRQAEERVK), and 716–963 (PPES…SSSP). The span at 637 to 651 (QKGNITASPSCSSPQ) shows a compositional bias: polar residues. Ser649 carries the phosphoserine modification. Residues 652-662 (KEQRQAEERVK) are compositionally biased toward basic and acidic residues. Over residues 718–727 (ESAAGAATAD) the composition is skewed to low complexity. Residues 768–778 (DEEDDDEEDGG) are compositionally biased toward acidic residues. The segment covering 787 to 796 (NDDSTNTFTS) has biased composition (polar residues). A compositionally biased stretch (pro residues) spans 799–809 (VLPPTAAPPPA). Positions 820-830 (QLVATTSTRSS) are enriched in low complexity. Residues 831–847 (SSRHLKTHRRSRSRSKN) show a composition bias toward basic residues. A compositionally biased stretch (low complexity) spans 848–858 (VRSSDSSPSSR). 2 stretches are compositionally biased toward basic residues: residues 861–870 (SRRRRQKSSR) and 882–913 (KSQHSSTQRKKTPKKRRRSKSRSRSKSIRRSR). Residues Ser912, Ser914, and Ser916 each carry the phosphoserine modification. Basic and acidic residues predominate over residues 934 to 944 (AEQRRQQDRRR). Basic residues predominate over residues 945–963 (TPTKKSHKRHKRRRRSSSP).

The protein localises to the nucleus speckle. In terms of biological role, regulator of pre-mRNA splicing (and, possibly, of other RNA processing events). Regulates its own expression at the level of RNA processing. In Drosophila melanogaster (Fruit fly), this protein is Protein suppressor of white apricot (su(w[a])).